We begin with the raw amino-acid sequence, 494 residues long: Fumarate hydratase, mitochondrial (494 aa).

The N-terminal 15 residues, 1–15 (MLRASATRFLSQAKN), are a transit peptide targeting the mitochondrion. Substrate is bound by residues 128–130 (SGT), 159–162 (HPND), 169–171 (SSN), and T217. H218 functions as the Proton donor/acceptor in the catalytic mechanism. S348 is a catalytic residue. Residues S349 and 354-356 (KVN) each bind substrate.

Belongs to the class-II fumarase/aspartase family. Fumarase subfamily. In terms of assembly, homotetramer.

The protein localises to the mitochondrion matrix. It localises to the cytoplasm. The protein resides in the nucleus. The enzyme catalyses (S)-malate = fumarate + H2O. Its pathway is carbohydrate metabolism; tricarboxylic acid cycle; (S)-malate from fumarate: step 1/1. Its function is as follows. Catalyzes the reversible stereospecific interconversion of fumarate to L-malate. In mitochondrion, catalyzes the hydration of fumarate to L-malate in the tricarboxylic acid (TCA) cycle to facilitate a transition step in the production of energy in the form of NADH. In cytoplasm and nucleus, involved in DNA repair in response to DNA damage: following DNA double-strand breaks (DSBs), translocates from the cytosol to the nucleus and promotes DNA repair by catalyzing the dehydration of L-malate to fumarate. The protein is Fumarate hydratase, mitochondrial of Rhizopus oryzae (Mucormycosis agent).